We begin with the raw amino-acid sequence, 116 residues long: Large ribosomal subunit protein uL24 (116 aa).

Belongs to the universal ribosomal protein uL24 family. In terms of assembly, part of the 50S ribosomal subunit.

In terms of biological role, one of two assembly initiator proteins, it binds directly to the 5'-end of the 23S rRNA, where it nucleates assembly of the 50S subunit. Functionally, one of the proteins that surrounds the polypeptide exit tunnel on the outside of the subunit. The chain is Large ribosomal subunit protein uL24 from Protochlamydia amoebophila (strain UWE25).